The primary structure comprises 103 residues: Small ribosomal subunit protein uS10 (103 aa).

It belongs to the universal ribosomal protein uS10 family. As to quaternary structure, part of the 30S ribosomal subunit.

Its function is as follows. Involved in the binding of tRNA to the ribosomes. This chain is Small ribosomal subunit protein uS10, found in Pseudomonas aeruginosa (strain LESB58).